A 565-amino-acid polypeptide reads, in one-letter code: uncharacterized protein (565 aa).

The next 5 helical transmembrane spans lie at 4-26, 33-55, 68-90, 97-119, and 162-184; these read FVQF…AVWV, GYGL…VGAA, SLLY…VNAL, YAIL…TQFF, and ISAM…IILL. RCK C-terminal domains are found at residues 210-295 and 296-379; these read PNVD…LGPE and VPDA…IFGV. The next 5 helical transmembrane spans lie at 389–411, 415–432, 453–472, 482–504, and 539–561; these read LLTL…PAFG, GLGN…VSSI, LGLI…DLLT, IFIV…GFHI, and WLGF…YFAM.

The protein belongs to the AAE transporter (TC 2.A.81) family.

Its subcellular location is the cell membrane. This is an uncharacterized protein from Bordetella bronchiseptica (strain ATCC BAA-588 / NCTC 13252 / RB50) (Alcaligenes bronchisepticus).